A 284-amino-acid polypeptide reads, in one-letter code: 2,3,4,5-tetrahydropyridine-2,6-dicarboxylate N-succinyltransferase (284 aa).

Residues arginine 111 and aspartate 148 each coordinate substrate.

This sequence belongs to the transferase hexapeptide repeat family. In terms of assembly, homotrimer.

Its subcellular location is the cytoplasm. It carries out the reaction (S)-2,3,4,5-tetrahydrodipicolinate + succinyl-CoA + H2O = (S)-2-succinylamino-6-oxoheptanedioate + CoA. It functions in the pathway amino-acid biosynthesis; L-lysine biosynthesis via DAP pathway; LL-2,6-diaminopimelate from (S)-tetrahydrodipicolinate (succinylase route): step 1/3. The polypeptide is 2,3,4,5-tetrahydropyridine-2,6-dicarboxylate N-succinyltransferase (Brucella anthropi (strain ATCC 49188 / DSM 6882 / CCUG 24695 / JCM 21032 / LMG 3331 / NBRC 15819 / NCTC 12168 / Alc 37) (Ochrobactrum anthropi)).